The chain runs to 149 residues: Transcriptional repressor NrdR (149 aa).

The segment at 3–34 is a zinc-finger region; that stretch reads CPFCSATDTKVIDSRLVADGHQVRRRRECTEC. Positions 49–139 constitute an ATP-cone domain; the sequence is PRVIKRDGTR…VYRAFEDVSQ (91 aa).

Belongs to the NrdR family. Zn(2+) serves as cofactor.

Negatively regulates transcription of bacterial ribonucleotide reductase nrd genes and operons by binding to NrdR-boxes. This is Transcriptional repressor NrdR from Shewanella frigidimarina (strain NCIMB 400).